A 230-amino-acid chain; its full sequence is Cytidylate kinase (230 aa).

Position 12 to 20 (12 to 20 (GPSGAGKGT)) interacts with ATP.

This sequence belongs to the cytidylate kinase family. Type 1 subfamily.

It is found in the cytoplasm. The enzyme catalyses CMP + ATP = CDP + ADP. It catalyses the reaction dCMP + ATP = dCDP + ADP. In Shewanella sp. (strain W3-18-1), this protein is Cytidylate kinase.